The following is a 349-amino-acid chain: Protein MULTIPLE CHLOROPLAST DIVISION SITE 1 (349 aa).

A chloroplast-targeting transit peptide spans 1-52 (MASIDSLQFHSLCNLQSSIGRAKLQNPSSLVIFRRRPVNLNWVQFETKGSFV). Residues 53 to 116 (CKAIGDSSTP…VVFLMKKCSV (64 aa)) lie on the Chloroplast intermembrane side of the membrane. A helical transmembrane segment spans residues 117–139 (NSIWIGVCITATVLVAAIRAYVV). The Stromal segment spans residues 140–349 (RKSRDNQRAG…NSSSEETHKS (210 aa)). Residues 315 to 349 (QRPYKFSAKLEGENIQKNSQENHTGNSSSEETHKS) form a disordered region. Residues 329–343 (IQKNSQENHTGNSSS) are compositionally biased toward polar residues.

Interacts with MIND1. Interacts with ARC6 in the chloroplast stroma and binds to FtsZ2-1 in an ARC6-dependent manner.

Its subcellular location is the plastid. It is found in the chloroplast inner membrane. In terms of biological role, required for chloroplast division. Together with MIND1 and ARC3, regulates FtsZ ring positioning in chloroplasts in an ARC6-dependent manner. Determines the site of chloroplast division in concert with MIND1. Not directly involved in ring formation, but required for MIND1 and MINE1 localization to regulate FtsZ ring formation during plastidial constriction. The chain is Protein MULTIPLE CHLOROPLAST DIVISION SITE 1 from Arabidopsis thaliana (Mouse-ear cress).